A 266-amino-acid chain; its full sequence is Oxidoreductase aflX (266 aa).

The protein belongs to the avfA family.

It participates in mycotoxin biosynthesis; aflatoxin biosynthesis. Functionally, oxidoreductase; part of the gene cluster that mediates the biosynthesis of aflatoxins, a group of polyketide-derived furanocoumarins, and part of the most toxic and carcinogenic compounds among the known mycotoxins. The four major aflatoxins produced by A.parasiticus are aflatoxin B1 (AFB1), aflatoxin B2 (AFB2), aflatoxin G1 (AFG1) and aflatoxin G2 (AFG2). Within the aflatoxin pathway, the oxidoreductase aflX seems to be involved in the conversion of versicolorin A (VERA) to demethylsterigmatocystin (DMST), through probable epoxide ring-opening step following versicolorin A oxidation required for the formation of the xanthone ring. The biosynthesis of aflatoxins begins with the norsolorinic acid synthase aflC that combines a hexanoyl starter unit produced by the fatty acid synthase aflA/aflB and 7 malonyl-CoA extender units to synthesize the precursor NOR. The second step is the conversion of NOR to averantin and requires the norsolorinic acid ketoreductase aflD, which catalyzes the dehydration of norsolorinic acid to form (1'S)-averantin. The norsolorinic acid reductases aflE and aflF may also play a role in the conversion of NOR to AVN. The cytochrome P450 monooxygenase aflG then catalyzes the hydroxylation of AVN to 5'hydroxyaverantin (HAVN). The next step is performed by the 5'-hydroxyaverantin dehydrogenase aflH that transforms HAVN to 5'-oxoaverantin (OAVN) which is further converted to averufin (AVF) by aflK that plays a dual role in the pathway, as a 5'-oxoaverantin cyclase that mediates conversion of 5'-oxoaverantin, as well as a versicolorin B synthase in a later step in the pathway. The averufin oxidase aflI catalyzes the conversion of AVF to versiconal hemiacetal acetate (VHA). VHA is then the substrate for the versiconal hemiacetal acetate esterase aflJ to yield versiconal (VAL). Versicolorin B synthase aflK then converts VAL to versicolorin B (VERB) by closing the bisfuran ring of aflatoxin which is required for DNA-binding, thus giving to aflatoxin its activity as a mutagen. Then, the activity of the versicolorin B desaturase aflL leads to versicolorin A (VERA). A branch point starts from VERB since it can also be converted to dihydrodemethylsterigmatocystin (DMDHST), probably also by aflL, VERA being a precursor for aflatoxins B1 and G1, and DMDHST for aflatoxins B2 and G2. Next, the versicolorin reductase aflM and the cytochrome P450 monooxygenase aflN are involved in conversion of VERA to demethylsterigmatocystin (DMST). AflX and aflY seem also involved in this step, through probable aflX-mediated epoxide ring-opening step following versicolorin A oxidation and aflY-mediated Baeyer-Villiger oxidation required for the formation of the xanthone ring. The methyltransferase aflO then leads to the modification of DMST to sterigmatocystin (ST), and of DMDHST to dihydrosterigmatocystin (DHST). Both ST and DHST are then substrates of the O-methyltransferase aflP to yield O-methylsterigmatocystin (OMST) and dihydro-O-methylsterigmatocystin (DHOMST), respectively. Finally OMST is converted to aflatoxins B1 and G1, and DHOMST to aflatoxins B2 and G2, via the action of several enzymes including O-methylsterigmatocystin oxidoreductase aflQ, the cytochrome P450 monooxygenase aflU, but also the NADH-dependent flavin oxidoreductase nadA which is specifically required for the synthesis of AFG1. The protein is Oxidoreductase aflX of Aspergillus parasiticus (strain ATCC 56775 / NRRL 5862 / SRRC 143 / SU-1).